The following is a 429-amino-acid chain: Ribosomal RNA small subunit methyltransferase B (429 aa).

S-adenosyl-L-methionine is bound by residues 254–260 (CAAPGGK), D277, D303, and D322. Residue C375 is the Nucleophile of the active site. The disordered stretch occupies residues 397–419 (ALSETGTPDQPGQQNLPGGEEGD). The span at 400 to 412 (ETGTPDQPGQQNL) shows a compositional bias: polar residues.

This sequence belongs to the class I-like SAM-binding methyltransferase superfamily. RsmB/NOP family.

The protein localises to the cytoplasm. It catalyses the reaction cytidine(967) in 16S rRNA + S-adenosyl-L-methionine = 5-methylcytidine(967) in 16S rRNA + S-adenosyl-L-homocysteine + H(+). Functionally, specifically methylates the cytosine at position 967 (m5C967) of 16S rRNA. The sequence is that of Ribosomal RNA small subunit methyltransferase B from Salmonella agona (strain SL483).